Reading from the N-terminus, the 392-residue chain is Magnesium-chelatase 38 kDa subunit (392 aa).

Positions 1 to 17 (MTQTANAAKKTTSTKAS) are enriched in low complexity. The segment at 1-21 (MTQTANAAKKTTSTKASAAKE) is disordered. 80 to 87 (GHRGTGKS) is an ATP binding site.

This sequence belongs to the Mg-chelatase subunits D/I family.

The catalysed reaction is protoporphyrin IX + Mg(2+) + ATP + H2O = Mg-protoporphyrin IX + ADP + phosphate + 3 H(+). It participates in porphyrin-containing compound metabolism; bacteriochlorophyll biosynthesis. Involved in bacteriochlorophyll biosynthesis; introduces a magnesium ion into protoporphyrin IX to yield Mg-protoporphyrin IX. The sequence is that of Magnesium-chelatase 38 kDa subunit (bchI) from Chlorobaculum tepidum (strain ATCC 49652 / DSM 12025 / NBRC 103806 / TLS) (Chlorobium tepidum).